The sequence spans 582 residues: Aspartate--tRNA ligase (582 aa).

Residue E174 participates in L-aspartate binding. Positions 198 to 201 (QITK) are aspartate. R220 is a binding site for L-aspartate. Residues 220-222 (RDE) and Q229 contribute to the ATP site. Residue H443 participates in L-aspartate binding. E477 provides a ligand contact to ATP. R484 is an L-aspartate binding site. 529 to 532 (GLDR) contributes to the ATP binding site.

The protein belongs to the class-II aminoacyl-tRNA synthetase family. Type 1 subfamily. Homodimer.

The protein localises to the cytoplasm. The enzyme catalyses tRNA(Asp) + L-aspartate + ATP = L-aspartyl-tRNA(Asp) + AMP + diphosphate. In terms of biological role, catalyzes the attachment of L-aspartate to tRNA(Asp) in a two-step reaction: L-aspartate is first activated by ATP to form Asp-AMP and then transferred to the acceptor end of tRNA(Asp). This chain is Aspartate--tRNA ligase, found in Streptococcus pyogenes serotype M3 (strain ATCC BAA-595 / MGAS315).